Here is a 144-residue protein sequence, read N- to C-terminus: Transcriptional regulator SlyA (144 aa).

One can recognise an HTH marR-type domain in the interval 2–135; sequence ESPLGSDLAR…LIKLIAKLEH (134 aa). Positions 49 to 72 form a DNA-binding region, H-T-H motif; the sequence is QIQLAKAIGIEQPSLVRTLDQLEE.

The protein belongs to the SlyA family. As to quaternary structure, homodimer.

Transcription regulator that can specifically activate or repress expression of target genes. This chain is Transcriptional regulator SlyA, found in Escherichia coli O127:H6 (strain E2348/69 / EPEC).